A 30-amino-acid chain; its full sequence is 2-enoate reductase (30 aa).

As to quaternary structure, dodecamer; tetramer of trimers. It depends on iron-sulfur cluster as a cofactor. FAD is required as a cofactor. Requires FMN as cofactor.

It carries out the reaction butanoate + NAD(+) = (2E)-2-butenoate + NADH + H(+). Its function is as follows. Involved in fermentation of amino acids (Stickland reaction) such as leucine, isoleucine, valine and phenylalanine. In Clostridium tyrobutyricum, this protein is 2-enoate reductase.